Reading from the N-terminus, the 878-residue chain is Phosphoenolpyruvate carboxylase (878 aa).

Residues H138 and K545 contribute to the active site.

It belongs to the PEPCase type 1 family. Mg(2+) is required as a cofactor.

The enzyme catalyses oxaloacetate + phosphate = phosphoenolpyruvate + hydrogencarbonate. In terms of biological role, forms oxaloacetate, a four-carbon dicarboxylic acid source for the tricarboxylic acid cycle. The protein is Phosphoenolpyruvate carboxylase of Shewanella sediminis (strain HAW-EB3).